Here is a 593-residue protein sequence, read N- to C-terminus: NADH-quinone oxidoreductase subunit C/D (593 aa).

Positions 1-184 (MTADTAVSIP…DPFSLTLAKQ (184 aa)) are NADH dehydrogenase I subunit C. Positions 208-593 (DYMFLNLGPN…IDFVMADVDR (386 aa)) are NADH dehydrogenase I subunit D.

The protein in the N-terminal section; belongs to the complex I 30 kDa subunit family. In the C-terminal section; belongs to the complex I 49 kDa subunit family. NDH-1 is composed of 13 different subunits. Subunits NuoB, CD, E, F, and G constitute the peripheral sector of the complex.

The protein resides in the cell inner membrane. It carries out the reaction a quinone + NADH + 5 H(+)(in) = a quinol + NAD(+) + 4 H(+)(out). Functionally, NDH-1 shuttles electrons from NADH, via FMN and iron-sulfur (Fe-S) centers, to quinones in the respiratory chain. The immediate electron acceptor for the enzyme in this species is believed to be ubiquinone. Couples the redox reaction to proton translocation (for every two electrons transferred, four hydrogen ions are translocated across the cytoplasmic membrane), and thus conserves the redox energy in a proton gradient. The sequence is that of NADH-quinone oxidoreductase subunit C/D from Ectopseudomonas mendocina (strain ymp) (Pseudomonas mendocina).